The primary structure comprises 214 residues: Thiamine-phosphate synthase (214 aa).

4-amino-2-methyl-5-(diphosphooxymethyl)pyrimidine-binding positions include 37 to 41 (QYREK) and Asn73. The Mg(2+) site is built by Asp74 and Asp93. Residue Ser112 participates in 4-amino-2-methyl-5-(diphosphooxymethyl)pyrimidine binding. 139-141 (TIS) lines the 2-[(2R,5Z)-2-carboxy-4-methylthiazol-5(2H)-ylidene]ethyl phosphate pocket. Residue Lys142 coordinates 4-amino-2-methyl-5-(diphosphooxymethyl)pyrimidine. Residues Gly171 and 191–192 (IS) each bind 2-[(2R,5Z)-2-carboxy-4-methylthiazol-5(2H)-ylidene]ethyl phosphate.

The protein belongs to the thiamine-phosphate synthase family. Mg(2+) serves as cofactor.

It catalyses the reaction 2-[(2R,5Z)-2-carboxy-4-methylthiazol-5(2H)-ylidene]ethyl phosphate + 4-amino-2-methyl-5-(diphosphooxymethyl)pyrimidine + 2 H(+) = thiamine phosphate + CO2 + diphosphate. The enzyme catalyses 2-(2-carboxy-4-methylthiazol-5-yl)ethyl phosphate + 4-amino-2-methyl-5-(diphosphooxymethyl)pyrimidine + 2 H(+) = thiamine phosphate + CO2 + diphosphate. It carries out the reaction 4-methyl-5-(2-phosphooxyethyl)-thiazole + 4-amino-2-methyl-5-(diphosphooxymethyl)pyrimidine + H(+) = thiamine phosphate + diphosphate. Its pathway is cofactor biosynthesis; thiamine diphosphate biosynthesis; thiamine phosphate from 4-amino-2-methyl-5-diphosphomethylpyrimidine and 4-methyl-5-(2-phosphoethyl)-thiazole: step 1/1. Condenses 4-methyl-5-(beta-hydroxyethyl)thiazole monophosphate (THZ-P) and 2-methyl-4-amino-5-hydroxymethyl pyrimidine pyrophosphate (HMP-PP) to form thiamine monophosphate (TMP). This chain is Thiamine-phosphate synthase, found in Listeria monocytogenes serovar 1/2a (strain ATCC BAA-679 / EGD-e).